A 260-amino-acid chain; its full sequence is Movement protein (260 aa).

The tract at residues Ser-230–Thr-260 is disordered.

Its function is as follows. Transports viral genome to neighboring plant cells directly through plasmosdesmata, without any budding. The movement protein allows efficient cell to cell propagation, by bypassing the host cell wall barrier. Might act by forming tubules structures that increase the size exclusion limit (SEL) of plasmodesmata, thereby allowing viral ribonucleoproteins to spread directly to neighboring cells. Binds to ssRNA. In Groundnut rosette virus (strain MC1) (GRV), this protein is Movement protein.